The chain runs to 222 residues: Vesicle-associated membrane protein 724 (222 aa).

At 1–197 (MGQESFIYSF…LWYQNMKIKL (197 aa)) the chain is on the cytoplasmic side. Residues 10 to 115 (FVARGTMILA…SLNKEFGPVM (106 aa)) enclose the Longin domain. A v-SNARE coiled-coil homology domain is found at 131-191 (KLIKVKAQVS…TQVRRKLWYQ (61 aa)). The helical; Anchor for type IV membrane protein transmembrane segment at 198–218 (VVLGILLLLVLIIWISVCHGF) threads the bilayer. Over 219 to 222 (NCTD) the chain is Vesicular.

It belongs to the synaptobrevin family. In terms of tissue distribution, expressed in flowers, leaves, stems and roots.

The protein localises to the cell membrane. Its subcellular location is the early endosome membrane. Functionally, involved in the targeting and/or fusion of transport vesicles to their target membrane. This chain is Vesicle-associated membrane protein 724, found in Arabidopsis thaliana (Mouse-ear cress).